The sequence spans 411 residues: uncharacterized protein (411 aa).

This is an uncharacterized protein from Mycoplasma genitalium (strain ATCC 33530 / DSM 19775 / NCTC 10195 / G37) (Mycoplasmoides genitalium).